Here is a 530-residue protein sequence, read N- to C-terminus: Ubiquitin carboxyl-terminal hydrolase 17-like protein 10 (530 aa).

The USP domain maps to 80 to 375 (AGLQNMGNTC…QAYVLFYIQK (296 aa)). Cys89 serves as the catalytic Nucleophile. The active-site Proton acceptor is the His334. 2 stretches are compositionally biased toward basic and acidic residues: residues 382-392 (SESVSRGREPR) and 398-410 (DTDR…ELKR). Disordered stretches follow at residues 382 to 410 (SESV…ELKR) and 477 to 530 (NHHP…LVCQ). The span at 484-495 (SSLLNLSSTTPT) shows a compositional bias: low complexity. A compositionally biased stretch (polar residues) spans 496–505 (DQESMNTGTL). Positions 510 to 524 (GRTRRSKGKNKHSKR) are enriched in basic residues.

Belongs to the peptidase C19 family. USP17 subfamily.

It is found in the nucleus. The protein resides in the endoplasmic reticulum. The enzyme catalyses Thiol-dependent hydrolysis of ester, thioester, amide, peptide and isopeptide bonds formed by the C-terminal Gly of ubiquitin (a 76-residue protein attached to proteins as an intracellular targeting signal).. Functionally, deubiquitinating enzyme that removes conjugated ubiquitin from specific proteins to regulate different cellular processes that may include cell proliferation, progression through the cell cycle, apoptosis, cell migration, and the cellular response to viral infection. The chain is Ubiquitin carboxyl-terminal hydrolase 17-like protein 10 (USP17L10) from Homo sapiens (Human).